Here is a 1868-residue protein sequence, read N- to C-terminus: Dedicator of cytokinesis protein 5 (1868 aa).

Residues 8 to 69 enclose the SH3 domain; sequence KRQKYGVAIY…PETYIHLKEA (62 aa). Phosphoserine is present on Ser365. The 185-residue stretch at 443–627 folds into the C2 DOCK-type domain; that stretch reads RNDIYVTLIH…DSFQIATLIC (185 aa). An N6-acetyllysine modification is found at Lys818. One can recognise a DOCKER domain in the interval 1231–1642; the sequence is YKDKKREDIY…VEKLYGVITL (412 aa). Residues 1681–1692 show a composition bias toward low complexity; the sequence is STSSNSSDNASS. Disordered regions lie at residues 1681-1730 and 1742-1868; these read STSS…RISK and QVIA…PGSQ. Positions 1704 to 1728 are enriched in basic and acidic residues; that stretch reads LFERRASSGARVEDLPPKEDSENRI. 5 positions are modified to phosphoserine: Ser1755, Ser1765, Ser1771, Ser1784, and Ser1788. Residue Thr1793 is modified to Phosphothreonine. Residues 1796–1810 are compositionally biased toward polar residues; sequence ATRTLSSPSLQTDGL. Phosphoserine is present on residues Ser1832 and Ser1867.

Belongs to the DOCK family. In terms of assembly, interacts with CRK and CRKL. Interacts (via N-terminus) with tensin TNS3 (via N-terminus); the interaction increases DOCK5 guanine nucleotide exchange activity towards Rac. Interacts with ELMO1. Highly expressed in lens, where it predominantly localizes to anterior epithelial cells, and is weakly expressed in lens fiber (at protein level). Expressed in brain, eye, lung, spleen and kidney, but not in thymus or peripheral blood leukocytes.

The protein localises to the cytoplasm. It localises to the cell membrane. Its subcellular location is the cell projection. It is found in the podosome. Functionally, guanine nucleotide exchange factor (GEF) for Rho and Rac. GEF proteins activate small GTPases by exchanging bound GDP for free GTP. Along with DOCK1, mediates CRK/CRKL regulation of epithelial and endothelial cell spreading and migration on type IV collagen. The chain is Dedicator of cytokinesis protein 5 from Mus musculus (Mouse).